A 932-amino-acid chain; its full sequence is Transcriptional regulatory protein DagR (932 aa).

A Sigma-54 factor interaction domain is found at 111 to 343; that stretch reads LIGYDRSLRD…LKSDIQFLCA (233 aa). Residues 141–148 and 210–219 each bind ATP; these read GPSGVGKT and ADGGYLLLDE. One can recognise a PRD 1 domain in the interval 462-567; that stretch reads RYGDQIEERV…KECRHYRQRI (106 aa). At His497 the chain carries Phosphohistidine. Residues 572–708 form the PTS EIIA type-4 domain; that stretch reads DCGVILIAHG…PQQENGGKVL (137 aa). The Tele-phosphohistidine intermediate role is filled by His580. In terms of domain architecture, PRD 2 spans 835–932; the sequence is LNPQRILKEM…YFYIYELLYS (98 aa). His870 carries the phosphohistidine modification.

In terms of biological role, involved in the regulation of the catabolism of D-glucosaminate. This Salmonella typhimurium (strain 14028s / SGSC 2262) protein is Transcriptional regulatory protein DagR (dgaR).